The sequence spans 137 residues: Phosphomevalonate dehydratase small subunit (137 aa).

Serine 65 functions as the Proton acceptor in the catalytic mechanism.

The protein belongs to the AcnX type II small subunit family. Heterodimer composed of a large subunit (PMDh-L) and a small subunit (PMDh-S).

It catalyses the reaction (R)-5-phosphomevalonate = (2E)-3-methyl-5-phosphooxypent-2-enoate + H2O. It participates in isoprenoid biosynthesis; isopentenyl diphosphate biosynthesis via mevalonate pathway. Component of a hydro-lyase that catalyzes the dehydration of mevalonate 5-phosphate (MVA5P) to form trans-anhydromevalonate 5-phosphate (tAHMP). Involved in the archaeal mevalonate (MVA) pathway, which provides fundamental precursors for isoprenoid biosynthesis, such as isopentenyl diphosphate (IPP) and dimethylallyl diphosphate (DMAPP). The polypeptide is Phosphomevalonate dehydratase small subunit (Methanococcoides burtonii (strain DSM 6242 / NBRC 107633 / OCM 468 / ACE-M)).